A 476-amino-acid polypeptide reads, in one-letter code: Stromelysin-2 (476 aa).

An N-terminal signal peptide occupies residues 1–17; sequence MEPLAILALLSLPICSA. A propeptide spans 18 to 99 (activation peptide); it reads YPLHGAVTQG…PRCGVPDVGG (82 aa). The Cysteine switch signature appears at 90-97; sequence PRCGVPDV. Zn(2+) contacts are provided by cysteine 92, histidine 168, aspartate 170, histidine 183, histidine 196, and histidine 218. Glutamate 219 is a catalytic residue. Zn(2+)-binding residues include histidine 222 and histidine 228. 4 Hemopexin repeats span residues 286–335, 336–382, 384–432, and 433–476; these read PDKC…WPTL, PSDL…GFPP, VKKI…FPGI, and EPQV…WLLC. Cysteine 289 and cysteine 476 are disulfide-bonded.

Belongs to the peptidase M10A family. The cofactor is Zn(2+). Ca(2+) is required as a cofactor. In terms of tissue distribution, expressed in small intestine. Weak levels in heart and lung.

The protein localises to the secreted. Its subcellular location is the extracellular space. It is found in the extracellular matrix. It catalyses the reaction Similar to stromelysin 1, but action on collagen types III, IV and V is weak.. In terms of biological role, can degrade fibronectin, gelatins of type I, III, IV, and V; weakly collagens III, IV, and V. Activates procollagenase. The chain is Stromelysin-2 (Mmp10) from Mus musculus (Mouse).